Here is a 149-residue protein sequence, read N- to C-terminus: Calmodulin-like protein (149 aa).

EF-hand domains lie at 6–41 (TTQALYKEAFNLFDKDKDGKITIQELGIVMRSVGSN), 42–76 (PTQQELKDIAKEIDDGSGLVDFSKFSSLMTRKMKY), 78–113 (DSEADIKQAFKVFDKKGNGYANIQDLKHTLTSIGEK), and 113–148 (KLTKEEFDNMLKDAKTVDGQIHVDEFVRVIKSSKSF). Ca(2+) is bound by residues Asp-19, Asp-21, Asp-23, Lys-25, and Glu-30.

Belongs to the calmodulin family.

The protein localises to the contractile vacuole. Functionally, mediates the control of a large number of enzymes, ion channels and other proteins by Ca(2+) ions. Among the enzymes to be stimulated by the calmodulin-Ca(2+) complex are a number of protein kinases and phosphatases. In Dictyostelium discoideum (Social amoeba), this protein is Calmodulin-like protein (calB).